Reading from the N-terminus, the 206-residue chain is Thymidylate kinase (206 aa).

16-23 (GIDGTGKS) contacts ATP.

The protein belongs to the thymidylate kinase family.

It carries out the reaction dTMP + ATP = dTDP + ADP. Its function is as follows. Phosphorylation of dTMP to form dTDP in both de novo and salvage pathways of dTTP synthesis. This chain is Thymidylate kinase, found in Akkermansia muciniphila (strain ATCC BAA-835 / DSM 22959 / JCM 33894 / BCRC 81048 / CCUG 64013 / CIP 107961 / Muc).